The sequence spans 316 residues: tRNA dimethylallyltransferase (316 aa).

17-24 is an ATP binding site; it reads GPTASGKT. 19–24 lines the substrate pocket; it reads TASGKT. Interaction with substrate tRNA regions lie at residues 42–45, 166–170, 247–252, and 280–287; these read DSAL, QRLSR, RCVGYR, and KRQITWLR.

This sequence belongs to the IPP transferase family. In terms of assembly, monomer. It depends on Mg(2+) as a cofactor.

The catalysed reaction is adenosine(37) in tRNA + dimethylallyl diphosphate = N(6)-dimethylallyladenosine(37) in tRNA + diphosphate. Catalyzes the transfer of a dimethylallyl group onto the adenine at position 37 in tRNAs that read codons beginning with uridine, leading to the formation of N6-(dimethylallyl)adenosine (i(6)A). The sequence is that of tRNA dimethylallyltransferase from Escherichia coli O6:K15:H31 (strain 536 / UPEC).